The chain runs to 500 residues: Glutamate decarboxylase (500 aa).

Lysine 277 bears the N6-(pyridoxal phosphate)lysine mark. Residues 469 to 500 form a calmodulin-binding region; sequence VHKKTDSEVQLEMITAWKKFVEEKKKKTNRVC.

This sequence belongs to the group II decarboxylase family. Homodimer. The cofactor is pyridoxal 5'-phosphate.

It carries out the reaction L-glutamate + H(+) = 4-aminobutanoate + CO2. Functionally, catalyzes the production of GABA. The calmodulin-binding is calcium-dependent and it is proposed that this may, directly or indirectly, form a calcium regulated control of GABA biosynthesis. The chain is Glutamate decarboxylase (GAD) from Petunia hybrida (Petunia).